The following is a 269-amino-acid chain: GTP cyclohydrolase FolE2 (269 aa).

Belongs to the GTP cyclohydrolase IV family.

The enzyme catalyses GTP + H2O = 7,8-dihydroneopterin 3'-triphosphate + formate + H(+). The protein operates within cofactor biosynthesis; 7,8-dihydroneopterin triphosphate biosynthesis; 7,8-dihydroneopterin triphosphate from GTP: step 1/1. Functionally, converts GTP to 7,8-dihydroneopterin triphosphate. The polypeptide is GTP cyclohydrolase FolE2 (Burkholderia ambifaria (strain ATCC BAA-244 / DSM 16087 / CCUG 44356 / LMG 19182 / AMMD) (Burkholderia cepacia (strain AMMD))).